The chain runs to 209 residues: Thiamine-phosphate synthase (209 aa).

Residues 38-42 (QYRAK) and Asn70 contribute to the 4-amino-2-methyl-5-(diphosphooxymethyl)pyrimidine site. Residues Asp71 and Asp90 each contribute to the Mg(2+) site. Ser109 contacts 4-amino-2-methyl-5-(diphosphooxymethyl)pyrimidine. Position 135-137 (135-137 (TST)) interacts with 2-[(2R,5Z)-2-carboxy-4-methylthiazol-5(2H)-ylidene]ethyl phosphate. Lys138 is a binding site for 4-amino-2-methyl-5-(diphosphooxymethyl)pyrimidine. Residues Gly165 and 185–186 (VS) contribute to the 2-[(2R,5Z)-2-carboxy-4-methylthiazol-5(2H)-ylidene]ethyl phosphate site.

This sequence belongs to the thiamine-phosphate synthase family. Mg(2+) is required as a cofactor.

It carries out the reaction 2-[(2R,5Z)-2-carboxy-4-methylthiazol-5(2H)-ylidene]ethyl phosphate + 4-amino-2-methyl-5-(diphosphooxymethyl)pyrimidine + 2 H(+) = thiamine phosphate + CO2 + diphosphate. The enzyme catalyses 2-(2-carboxy-4-methylthiazol-5-yl)ethyl phosphate + 4-amino-2-methyl-5-(diphosphooxymethyl)pyrimidine + 2 H(+) = thiamine phosphate + CO2 + diphosphate. The catalysed reaction is 4-methyl-5-(2-phosphooxyethyl)-thiazole + 4-amino-2-methyl-5-(diphosphooxymethyl)pyrimidine + H(+) = thiamine phosphate + diphosphate. The protein operates within cofactor biosynthesis; thiamine diphosphate biosynthesis; thiamine phosphate from 4-amino-2-methyl-5-diphosphomethylpyrimidine and 4-methyl-5-(2-phosphoethyl)-thiazole: step 1/1. Its function is as follows. Condenses 4-methyl-5-(beta-hydroxyethyl)thiazole monophosphate (THZ-P) and 2-methyl-4-amino-5-hydroxymethyl pyrimidine pyrophosphate (HMP-PP) to form thiamine monophosphate (TMP). This Persephonella marina (strain DSM 14350 / EX-H1) protein is Thiamine-phosphate synthase.